The following is a 123-amino-acid chain: uncharacterized protein (123 aa).

A helical transmembrane segment spans residues 1–21 (MHIIAKSILLMAVSFLVIIFT).

The protein resides in the membrane. This is an uncharacterized protein from Methanocaldococcus jannaschii (strain ATCC 43067 / DSM 2661 / JAL-1 / JCM 10045 / NBRC 100440) (Methanococcus jannaschii).